Consider the following 420-residue polypeptide: Protein TabA (420 aa).

N6-(pyridoxal phosphate)lysine is present on Lys57.

It belongs to the Orn/Lys/Arg decarboxylase class-II family. Requires pyridoxal 5'-phosphate as cofactor.

Involved in tabtoxin production and pathogenicity. In Pseudomonas amygdali pv. tabaci (Pseudomonas syringae pv. tabaci), this protein is Protein TabA (tabA).